We begin with the raw amino-acid sequence, 779 residues long: 3-isopropylmalate dehydratase (779 aa).

[4Fe-4S] cluster contacts are provided by Cys360, Cys421, and Cys424. The segment at 484–518 is disordered; sequence QDQSSPKVEVTSEDEKELESAAYDHAEPVQPEDAP. Ser488 is modified (phosphoserine). At Thr494 the chain carries Phosphothreonine. Ser495 carries the phosphoserine modification. Basic and acidic residues predominate over residues 501–510; it reads LESAAYDHAE.

Belongs to the aconitase/IPM isomerase family. Monomer. The cofactor is [4Fe-4S] cluster.

It catalyses the reaction (2R,3S)-3-isopropylmalate = (2S)-2-isopropylmalate. It functions in the pathway amino-acid biosynthesis; L-leucine biosynthesis; L-leucine from 3-methyl-2-oxobutanoate: step 2/4. Its function is as follows. Catalyzes the isomerization between 2-isopropylmalate and 3-isopropylmalate, via the formation of 2-isopropylmaleate. The chain is 3-isopropylmalate dehydratase (LEU1) from Saccharomyces cerevisiae (strain ATCC 204508 / S288c) (Baker's yeast).